A 340-amino-acid polypeptide reads, in one-letter code: 4-dimethylallyltryptophan N-methyltransferase ifgB (340 aa).

Belongs to the methyltransferase superfamily. In terms of assembly, homodimer.

It catalyses the reaction 4-(3-methylbut-2-enyl)-L-tryptophan + S-adenosyl-L-methionine = 4-(3-methylbut-2-enyl)-L-abrine + S-adenosyl-L-homocysteine + H(+). Its pathway is alkaloid biosynthesis; ergot alkaloid biosynthesis. Its function is as follows. 4-dimethylallyltryptophan N-methyltransferase; part of the gene cluster that mediates the biosynthesis of isofumigaclavines, fungal ergot alkaloids. The tryptophan dimethylallyltransferase ifgA catalyzes the first step of ergot alkaloid biosynthesis by condensing dimethylallyl diphosphate (DMAP) and tryptophan to form 4-dimethylallyl-L-tryptophan. The second step is catalyzed by the methyltransferase ifgB that methylates 4-dimethylallyl-L-tryptophan in the presence of S-adenosyl-L-methionine, resulting in the formation of N-methyl-dimethylallyl-L-tryptophan. The catalase ifgD and the FAD-dependent oxidoreductase ifgC then transform N-methyl-dimethylallyl-L-tryptophan to chanoclavine-I which is further oxidized by ifgE in the presence of NAD(+), resulting in the formation of chanoclavine-I aldehyde. The chanoclavine-I aldehyde reductases ifgG and/or fgaOx3 reduce chanoclavine-I aldehyde to dihydrochanoclavine-I aldehyde that spontaneously dehydrates to form 6,8-dimethyl-6,7-didehydroergoline. The festuclavine dehydrogenases ifgF1 and/or ifgF2 then catalyze the reduction of 6,8-dimethyl-6,7-didehydroergoline to form festuclavine. Hydrolysis of festuclavine by a yet undetermined cytochrome P450 monooxygenase (called ifgH) then leads to the formation of isofumigaclavine B which is in turn acetylated by ifgI to isofumigaclavine A. Penicillium roqueforti has interestingly at least two sets of genes for the consumption of chanoclavine-I aldehyde on three different loci, the OYEs ifgG/fgaOx3 and the festuclavine synthase homologs ifgF1/ifgF2. The reason for the duplication of these genes is unclear, probably to ensure the conversion of chanoclavine-I aldehyde by differential gene expression under various environmental conditions. In Penicillium roqueforti (strain FM164), this protein is 4-dimethylallyltryptophan N-methyltransferase ifgB.